The sequence spans 412 residues: Putative gustatory receptor 58c (412 aa).

A run of 2 helical transmembrane segments spans residues 39–59 (VVYC…ALFV) and 72–92 (MFGV…LFLM). N-linked (GlcNAc...) asparagine glycosylation is present at asparagine 158. The helical transmembrane segment at 173–193 (IVYALIMILLMSYVDMTVYMV) threads the bilayer. Asparagine 203 is a glycosylation site (N-linked (GlcNAc...) asparagine). Transmembrane regions (helical) follow at residues 224–241 (IPRE…RKLW), 262–282 (VLFN…RLWI), and 296–316 (ILYA…FSIF). Asparagine 337, asparagine 386, and asparagine 391 each carry an N-linked (GlcNAc...) asparagine glycan.

This sequence belongs to the insect chemoreceptor superfamily. Gustatory receptor (GR) family. Gr10a subfamily.

The protein localises to the cell membrane. Its function is as follows. Probable gustatory receptor which mediates acceptance or avoidance behavior, depending on its substrates. In Drosophila melanogaster (Fruit fly), this protein is Putative gustatory receptor 58c (Gr58c).